Reading from the N-terminus, the 523-residue chain is Major facilitator-type transporter psiT2 (523 aa).

Residues 1 to 26 (MSLERSTSPNPTERTSLLSDTASTIS) are compositionally biased toward polar residues. Residues 1–45 (MSLERSTSPNPTERTSLLSDTASTISSRDDVEQSSLKQRRTPIPT) are disordered. A run of 5 helical transmembrane segments spans residues 88-108 (FYSG…IFML), 125-145 (ALGI…TMML), 149-169 (VCAG…SELT), 175-195 (ALVV…GPLI), and 221-241 (FLPS…GYFF). Asparagine 269 carries N-linked (GlcNAc...) asparagine glycosylation. A run of 3 helical transmembrane segments spans residues 317–337 (FLMF…FTAV), 352–372 (AFSV…PWVL), and 382–402 (HFCM…NPLA). Asparagine 410 carries N-linked (GlcNAc...) asparagine glycosylation. 3 helical membrane passes run 419–439 (GLLY…VMAF), 455–474 (LATA…AFCP), and 488–508 (NILG…VGVW).

The protein belongs to the major facilitator superfamily. TCR/Tet family.

It is found in the membrane. Its function is as follows. Major facilitator-type transporter; part of the gene cluster that mediates the biosynthesis of psilocybin, a psychotropic tryptamine-derived natural product. The polypeptide is Major facilitator-type transporter psiT2 (Psilocybe cubensis (Psychedelic mushroom)).